Reading from the N-terminus, the 346-residue chain is Angiopoietin-related protein 7 (346 aa).

The signal sequence occupies residues 1–26; that stretch reads MLKKPLSAVTWLCIFIVAFVSHPAWL. The stretch at 39–119 forms a coiled coil; sequence QLKAANCCEE…DIMQLQAAQT (81 aa). Asn-58 is a glycosylation site (N-linked (GlcNAc...) asparagine). Positions 122–343 constitute a Fibrinogen C-terminal domain; it reads QTSADAIYDC…RVEMKIRPED (222 aa). A disulfide bond links Cys-131 and Cys-162. N-linked (GlcNAc...) asparagine glycosylation is found at Asn-253 and Asn-267. A disulfide bridge links Cys-285 with Cys-298.

In terms of assembly, homotetramer; disulfide-linked. Highly expressed in the cornea (at protein level). Expression is restricted to the stromal layer. Also detected at the junction between the corneal stromal layer and the conjuctiva. Not detected in the sclera.

It is found in the secreted. Functionally, has a role in the formation and organization of the extracellular matrix. In the eye, it functions as a mediator of dexamethasone-induced matrix deposition in the trabecular meshwork, the tissue responsible for the outflow of the ocular aqueous humor and for the maintenance of intraocular pressure. Is a negative regulator of angiogenesis in the cornea, and plays a major role in maintaining corneal avascularity and transparency. In Homo sapiens (Human), this protein is Angiopoietin-related protein 7 (ANGPTL7).